The primary structure comprises 276 residues: Large ribosomal subunit protein uL2 (276 aa).

The disordered stretch occupies residues 221 to 276 (RGSAMNPNDHPHGGGEGRAPIGRKSPMTPWGKKARGVKTRDRKKASNALIIRRRTK). Over residues 252-276 (KKARGVKTRDRKKASNALIIRRRTK) the composition is skewed to basic residues.

The protein belongs to the universal ribosomal protein uL2 family. As to quaternary structure, part of the 50S ribosomal subunit. Forms a bridge to the 30S subunit in the 70S ribosome.

Functionally, one of the primary rRNA binding proteins. Required for association of the 30S and 50S subunits to form the 70S ribosome, for tRNA binding and peptide bond formation. It has been suggested to have peptidyltransferase activity; this is somewhat controversial. Makes several contacts with the 16S rRNA in the 70S ribosome. In Onion yellows phytoplasma (strain OY-M), this protein is Large ribosomal subunit protein uL2.